Here is a 214-residue protein sequence, read N- to C-terminus: Large ribosomal subunit protein uL16-like (214 aa).

It belongs to the universal ribosomal protein uL16 family. Component of the 60S large ribosomal subunit (LSU).

It is found in the cytoplasm. In terms of biological role, testis-specific component of the ribosome, which is required for the transition from prophase to metaphase in male meiosis I. Compensates for the inactivated X-linked RPL10 paralog during spermatogenesis. The ribosome is a large ribonucleoprotein complex responsible for the synthesis of proteins in the cell. The small ribosomal subunit (SSU) binds messenger RNAs (mRNAs) and translates the encoded message by selecting cognate aminoacyl-transfer RNA (tRNA) molecules. The large subunit (LSU) contains the ribosomal catalytic site termed the peptidyl transferase center (PTC), which catalyzes the formation of peptide bonds, thereby polymerizing the amino acids delivered by tRNAs into a polypeptide chain. The nascent polypeptides leave the ribosome through a tunnel in the LSU and interact with protein factors that function in enzymatic processing, targeting, and the membrane insertion of nascent chains at the exit of the ribosomal tunnel. This chain is Large ribosomal subunit protein uL16-like (RPL10L), found in Macaca fascicularis (Crab-eating macaque).